The primary structure comprises 326 residues: MSDTSKGIPQEQLPSQELHPPPMPVINLGHLSLDDPTVRSRVVNDIAKACRDLGYFQVISHGISQSVMDGAIEAASEFFKLPNEIKKEYASDDIRQPVRYDTSSKDGISMSRAFLKHYAHPLCDWLQYWPQQPPIYREYMAKYAVEVRVVALKLMEAILEGLGIGKEYMQEKFEEGLQLLSVNCYPKVSQSDTSIGLAAHSDYGLLTILLTSCQGLEVVDRSSNSWKVVQQLPHALHVHVGDHMEVLSNGRIKTVVHRAVLNPQEARISLASIHGFALHEKVSSAKELVDEENPQKYKENSFNDFLEHLTANMDNRQRNFLESLRM.

Residues 1-15 (MSDTSKGIPQEQLPS) show a composition bias toward polar residues. The tract at residues 1 to 21 (MSDTSKGIPQEQLPSQELHPP) is disordered. Positions 175-276 (EGLQLLSVNC…RISLASIHGF (102 aa)) constitute a Fe2OG dioxygenase domain. Fe cation is bound by residues His200, Asp202, and His257. Arg267 contributes to the 2-oxoglutarate binding site.

This sequence belongs to the iron/ascorbate-dependent oxidoreductase family. Fe(2+) is required as a cofactor. The cofactor is L-ascorbate. As to expression, expressed at very low levels in roots, leaves, stems and seeds.

The catalysed reaction is a (2S)-flavan-4-one + 2-oxoglutarate + O2 = a (2R,3R)-dihydroflavonol + succinate + CO2. The protein operates within secondary metabolite biosynthesis; flavonoid biosynthesis. Its function is as follows. Catalyzes the 3-beta-hydroxylation of 2S-flavanones to 2R,3R-dihydroflavonols which are intermediates in the biosynthesis of flavonols, anthocyanidins, catechins and proanthocyanidins in plants. Converts (2S)-eriodictyol to (+)-taxifolin and (2S)-naringenin to (+)-(2R/3R)-dihydrokaempferol in vitro. In Oryza sativa subsp. japonica (Rice), this protein is Flavanone 3-dioxygenase 3.